Consider the following 426-residue polypeptide: Enolase (426 aa).

Residue Gln-163 coordinates (2R)-2-phosphoglycerate. The active-site Proton donor is Glu-205. 3 residues coordinate Mg(2+): Asp-242, Glu-285, and Asp-312. Positions 337, 366, 367, and 388 each coordinate (2R)-2-phosphoglycerate. Lys-337 (proton acceptor) is an active-site residue.

Belongs to the enolase family. As to quaternary structure, component of the RNA degradosome, a multiprotein complex involved in RNA processing and mRNA degradation. Mg(2+) serves as cofactor.

It localises to the cytoplasm. It is found in the secreted. The protein localises to the cell surface. The catalysed reaction is (2R)-2-phosphoglycerate = phosphoenolpyruvate + H2O. It participates in carbohydrate degradation; glycolysis; pyruvate from D-glyceraldehyde 3-phosphate: step 4/5. Catalyzes the reversible conversion of 2-phosphoglycerate (2-PG) into phosphoenolpyruvate (PEP). It is essential for the degradation of carbohydrates via glycolysis. In Nitrosococcus oceani (strain ATCC 19707 / BCRC 17464 / JCM 30415 / NCIMB 11848 / C-107), this protein is Enolase.